A 101-amino-acid polypeptide reads, in one-letter code: Cilia- and flagella-associated protein 141 (101 aa).

As to quaternary structure, microtubule inner protein component of sperm flagellar doublet microtubules. In terms of tissue distribution, expressed in airway epithelial cells.

It localises to the cytoplasm. Its subcellular location is the cytoskeleton. The protein resides in the cilium axoneme. The protein localises to the flagellum axoneme. Microtubule inner protein (MIP) part of the dynein-decorated doublet microtubules (DMTs) in cilia axoneme, which is required for motile cilia beating. The polypeptide is Cilia- and flagella-associated protein 141 (Homo sapiens (Human)).